We begin with the raw amino-acid sequence, 611 residues long: 1,4-alpha-glucan branching enzyme GlgB (611 aa).

The Nucleophile role is filled by aspartate 302. Glutamate 343 functions as the Proton donor in the catalytic mechanism.

This sequence belongs to the glycosyl hydrolase 13 family. GlgB subfamily. As to quaternary structure, monomer.

The catalysed reaction is Transfers a segment of a (1-&gt;4)-alpha-D-glucan chain to a primary hydroxy group in a similar glucan chain.. It functions in the pathway glycan biosynthesis; glycogen biosynthesis. Its function is as follows. Catalyzes the formation of the alpha-1,6-glucosidic linkages in glycogen by scission of a 1,4-alpha-linked oligosaccharide from growing alpha-1,4-glucan chains and the subsequent attachment of the oligosaccharide to the alpha-1,6 position. This is 1,4-alpha-glucan branching enzyme GlgB from Fusobacterium nucleatum subsp. nucleatum (strain ATCC 25586 / DSM 15643 / BCRC 10681 / CIP 101130 / JCM 8532 / KCTC 2640 / LMG 13131 / VPI 4355).